The primary structure comprises 393 residues: S-adenosylmethionine synthase 1 (393 aa).

Glu-9 is a binding site for Mg(2+). Residue His-15 participates in ATP binding. Position 43 (Glu-43) interacts with K(+). Residues Glu-56 and Gln-99 each coordinate L-methionine. Residues 167–169, 235–238, Asp-246, 252–253, Ala-269, Lys-273, and Lys-277 contribute to the ATP site; these read DGK, SGRF, and RK. Residue Asp-246 participates in L-methionine binding. Lys-277 provides a ligand contact to L-methionine.

It belongs to the AdoMet synthase family. Homotetramer. It depends on Mn(2+) as a cofactor. Mg(2+) is required as a cofactor. Requires Co(2+) as cofactor. K(+) serves as cofactor.

The protein resides in the cytoplasm. The catalysed reaction is L-methionine + ATP + H2O = S-adenosyl-L-methionine + phosphate + diphosphate. Its pathway is amino-acid biosynthesis; S-adenosyl-L-methionine biosynthesis; S-adenosyl-L-methionine from L-methionine: step 1/1. Catalyzes the formation of S-adenosylmethionine from methionine and ATP. The reaction comprises two steps that are both catalyzed by the same enzyme: formation of S-adenosylmethionine (AdoMet) and triphosphate, and subsequent hydrolysis of the triphosphate. The chain is S-adenosylmethionine synthase 1 (SAMS1) from Brassica juncea (Indian mustard).